Here is an 852-residue protein sequence, read N- to C-terminus: Polyphosphate kinase (852 aa).

Disordered regions lie at residues 1 to 36 (MATGVSSRDGSRERIRRRAVARDHPGCGPHRLDRPI) and 58 to 82 (SHDPAPSQSVGKRPQKSTKTASRRK). Positions 20–36 (VARDHPGCGPHRLDRPI) are enriched in basic and acidic residues. Residues 58-67 (SHDPAPSQSV) show a composition bias toward polar residues. Position 131 (N131) interacts with ATP. A disordered region spans residues 251 to 303 (GDEIGPQRTPPPSDSLDNRVPSNLKRNSDTANQQPTPAENISAPEDGAEQTEP). The tract at residues 258–303 (RTPPPSDSLDNRVPSNLKRNSDTANQQPTPAENISAPEDGAEQTEP) is insert. Residues 270 to 289 (VPSNLKRNSDTANQQPTPAE) show a composition bias toward polar residues. Mg(2+) contacts are provided by R524 and R554. H584 (phosphohistidine intermediate) is an active-site residue. ATP-binding residues include Y617, R713, and H741.

The protein belongs to the polyphosphate kinase 1 (PPK1) family. Mg(2+) serves as cofactor. An intermediate of this reaction is the autophosphorylated ppk in which a phosphate is covalently linked to a histidine residue through a N-P bond.

The enzyme catalyses [phosphate](n) + ATP = [phosphate](n+1) + ADP. In terms of biological role, catalyzes the reversible transfer of the terminal phosphate of ATP to form a long-chain polyphosphate (polyP). This Rhodopirellula baltica (strain DSM 10527 / NCIMB 13988 / SH1) protein is Polyphosphate kinase.